The primary structure comprises 504 residues: Tyrosine-protein kinase HCK (504 aa).

A lipid anchor (N-myristoyl glycine) is attached at G2. C3 carries S-palmitoyl cysteine lipidation. T15 is modified (phosphothreonine). Y30 carries the phosphotyrosine modification. Residues 34–49 (PTSTIKPGPNSNNRNT) are compositionally biased toward polar residues. The tract at residues 34-53 (PTSTIKPGPNSNNRNTPGIG) is disordered. The SH3 domain maps to 56–116 (SEDIIVVALY…PSNYVARVDS (61 aa)). The SH2 domain maps to 122–219 (WFFKGISRKD…GLCQKLSVPC (98 aa)). T180 is subject to Phosphothreonine. The residue at position 187 (Y187) is a Phosphotyrosine. The region spanning 240–493 (LKLEKKLGAG…YIQSVLDDFY (254 aa)) is the Protein kinase domain. ATP is bound by residues 246–254 (LGAGQFGEV) and K268. Catalysis depends on D359, which acts as the Proton acceptor. The residue at position 389 (Y389) is a Phosphotyrosine; by autocatalysis. Residue S440 is modified to Phosphoserine. Position 500 is a phosphotyrosine (Y500).

The protein belongs to the protein kinase superfamily. Tyr protein kinase family. SRC subfamily. As to quaternary structure, interacts with ADAM15. Interacts with FASLG. Interacts with ARRB1 and ARRB2. Interacts with FCGR1A; the interaction may be indirect. Interacts with IL6ST. Interacts (via SH3 domain) with ELMO1. Interacts (via SH3 domain) with TP73. Interacts with YAP1. Interacts with ABL1 and ITGB1, and thereby recruits ABL1 to activated ITGB1. Interacts (via SH2 domain) with FLT3 (tyrosine phosphorylated). Interacts with CBL. Interacts with VAV1, WAS and RAPGEF1. Interacts (via SH3 domain) with WDCP. In terms of processing, phosphorylated on several tyrosine residues. Autophosphorylated. Becomes rapidly phosphorylated upon activation of the immunoglobulin receptors FCGR1A and FCGR2A. Phosphorylation at Tyr-389 increases kinase activity. Phosphorylation at Tyr-500 inhibits kinase activity. Kinase activity is not required for phosphorylation at Tyr-500, suggesting that this site may be a target of other kinases. Ubiquitinated by CBL, leading to its degradation via the proteasome. Post-translationally, palmitoylation requires prior myristoylation. Palmitoylation is required for caveolar localization.

It localises to the cytoplasmic vesicle. The protein localises to the secretory vesicle. Its subcellular location is the cytoplasm. It is found in the cytosol. The protein resides in the cell membrane. It localises to the membrane. The protein localises to the caveola. Its subcellular location is the cell junction. It is found in the focal adhesion. The protein resides in the cytoskeleton. It localises to the golgi apparatus. The protein localises to the lysosome. Its subcellular location is the nucleus. It catalyses the reaction L-tyrosyl-[protein] + ATP = O-phospho-L-tyrosyl-[protein] + ADP + H(+). Subject to autoinhibition, mediated by intramolecular interactions involving the SH2 and SH3 domains. Kinase activity is also regulated by phosphorylation at regulatory tyrosine residues. Phosphorylation at Tyr-389 is required for optimal activity. Phosphorylation at Tyr-500 inhibits kinase activity. Its function is as follows. Non-receptor tyrosine-protein kinase found in hematopoietic cells that transmits signals from cell surface receptors and plays an important role in the regulation of innate immune responses, including neutrophil, monocyte, macrophage and mast cell functions, phagocytosis, cell survival and proliferation, cell adhesion and migration. Acts downstream of receptors that bind the Fc region of immunoglobulins, such as FCGR1A and FCGR2A, but also CSF3R, PLAUR, the receptors for IFNG, IL2, IL6 and IL8, and integrins, such as ITGB1 and ITGB2. During the phagocytic process, mediates mobilization of secretory lysosomes, degranulation, and activation of NADPH oxidase to bring about the respiratory burst. Plays a role in the release of inflammatory molecules. Promotes reorganization of the actin cytoskeleton and actin polymerization, formation of podosomes and cell protrusions. Inhibits TP73-mediated transcription activation and TP73-mediated apoptosis. Phosphorylates CBL in response to activation of immunoglobulin gamma Fc region receptors. Phosphorylates ADAM15, BCR, ELMO1, FCGR2A, GAB1, GAB2, RAPGEF1, STAT5B, TP73, VAV1 and WAS. In Macaca fascicularis (Crab-eating macaque), this protein is Tyrosine-protein kinase HCK (HCK).